We begin with the raw amino-acid sequence, 606 residues long: Protein spire homolog 2 (606 aa).

Residues 21–219 (LSLEEVLKSY…RALFLETLEL (199 aa)) form the KIND domain. A disordered region spans residues 147 to 181 (KHCGSNAAKDEGYSGQDEEEEEEEEEEEEGAGRGI). The span at 162 to 175 (QDEEEEEEEEEEEE) shows a compositional bias: acidic residues. 2 WH2 domains span residues 263–277 (QLMKELRQGVKLKKV) and 357–374 (LHDRVLAEIRQDHKLRPV). Disordered regions lie at residues 438 to 464 (DEDSPDGVDMRRVESSPTPLKRDRSFS) and 517 to 537 (CRSLSSDDRSSDPGGDSASHG). Residues 445–464 (VDMRRVESSPTPLKRDRSFS) show a composition bias toward basic and acidic residues. The segment at 554–574 (LALTVDGVINVRRILVKAEME) is spir-box.

This sequence belongs to the spire family.

It is found in the cytoplasm. Its subcellular location is the cytoskeleton. It localises to the cytosol. The protein resides in the cell membrane. The protein localises to the cytoplasmic vesicle membrane. Acts as an actin nucleation factor, remains associated with the slow-growing pointed end of the new filament. Involved in intracellular vesicle transport along actin fibers, providing a novel link between actin cytoskeleton dynamics and intracellular transport. Required for asymmetric spindle positioning and asymmetric cell division during oocyte meiosis. Required for normal formation of the cleavage furrow and for polar body extrusion during female germ cell meiosis. Also acts in the nucleus: together with SPIRE1 and SPIRE2, promotes assembly of nuclear actin filaments in response to DNA damage in order to facilitate movement of chromatin and repair factors after DNA damage. The polypeptide is Protein spire homolog 2 (spire2) (Danio rerio (Zebrafish)).